Here is a 211-residue protein sequence, read N- to C-terminus: Small ribosomal subunit protein uS3 (211 aa).

Residues 38-106 form the KH type-2 domain; that stretch reads LRKFIKKAFY…NIELNIIEVK (69 aa).

This sequence belongs to the universal ribosomal protein uS3 family. Part of the 30S ribosomal subunit. Forms a tight complex with proteins S10 and S14.

Functionally, binds the lower part of the 30S subunit head. Binds mRNA in the 70S ribosome, positioning it for translation. The polypeptide is Small ribosomal subunit protein uS3 (Ehrlichia chaffeensis (strain ATCC CRL-10679 / Arkansas)).